The following is a 644-amino-acid chain: Exoribonuclease 2 (644 aa).

The region spanning 189 to 516 is the RNB domain; sequence REDLTALNFV…NHRLLKAMIT (328 aa). In terms of domain architecture, S1 motif spans 561–643; it reads DTRFTAEIID…ETRNVIARPV (83 aa).

The protein belongs to the RNR ribonuclease family. RNase II subfamily.

The protein resides in the cytoplasm. It catalyses the reaction Exonucleolytic cleavage in the 3'- to 5'-direction to yield nucleoside 5'-phosphates.. Involved in mRNA degradation. Hydrolyzes single-stranded polyribonucleotides processively in the 3' to 5' direction. The protein is Exoribonuclease 2 of Yersinia pseudotuberculosis serotype IB (strain PB1/+).